The chain runs to 137 residues: Peptide methionine sulfoxide reductase MsrB (137 aa).

The MsrB domain maps to 7–129 (AEELKKKLSE…NSASLAFSDE (123 aa)). Zn(2+) is bound by residues cysteine 46, cysteine 49, cysteine 95, and cysteine 98. Catalysis depends on cysteine 118, which acts as the Nucleophile.

Belongs to the MsrB Met sulfoxide reductase family. Zn(2+) serves as cofactor.

The enzyme catalyses L-methionyl-[protein] + [thioredoxin]-disulfide + H2O = L-methionyl-(R)-S-oxide-[protein] + [thioredoxin]-dithiol. This Salmonella dublin (strain CT_02021853) protein is Peptide methionine sulfoxide reductase MsrB.